The following is a 2006-amino-acid chain: Supporter of activation of yellow protein (2006 aa).

8 disordered regions span residues Met1–Glu208, Met313–Ala347, Glu458–Gln564, Asp744–Arg794, Asp821–Arg916, Val929–Ser1029, Cys1044–Leu1082, and Gln1099–Ala1196. Residues Val10 to Thr60 are compositionally biased toward low complexity. A compositionally biased stretch (polar residues) spans Val67–Asn81. Pro residues predominate over residues Ser118 to Thr128. Over residues Pro129–Ala168 the composition is skewed to low complexity. The span at Ala189–Gln199 shows a compositional bias: polar residues. Positions Leu321–Ala347 are enriched in low complexity. Residues Gly485–Glu494 are compositionally biased toward polar residues. Residues Ser525–Ile534 show a composition bias toward basic and acidic residues. Over residues Ala543–Ser563 the composition is skewed to low complexity. The span at Asp744–Asn758 shows a compositional bias: basic and acidic residues. 2 stretches are compositionally biased toward polar residues: residues Ser759–Leu769 and Pro828–Leu844. Over residues Pro861–Ala870 the composition is skewed to pro residues. 2 stretches are compositionally biased toward basic and acidic residues: residues Ala936–Ser945 and Glu963–Pro972. Composition is skewed to low complexity over residues Arg978–Thr990 and Ser1018–Ser1029. Residues Gly1053–Asp1080 are compositionally biased toward polar residues. The segment covering Ser1103 to Gly1112 has biased composition (low complexity). Positions Gly1147–Arg1158 are enriched in basic residues. Low complexity predominate over residues Gly1161 to Gly1173. An SAY region spans residues Met1340–Leu1573. Residues Ala1579–Glu1685 are disordered. Composition is skewed to low complexity over residues Thr1627–Thr1652 and Phe1660–Gly1677. The PHD-type 1; degenerate zinc finger occupies Thr1694–Cys1751. The PHD-type 2; degenerate zinc finger occupies Lys1753–Cys1796. Residues Thr1887–Pro1911 form a disordered region.

It belongs to the SAYP family. As to expression, widely expressed. Highly expressed in ovary. Expressed in nursing cells and growing oocytes at all stages of development and accumulates in mature oocytes. Expressed in the nuclei of syncytium blastoderm of early embryos and in the nuclei of different tissues of late embryos, larvae, and adults.

The protein resides in the nucleus. It localises to the cytoplasm. It is found in the chromosome. Functionally, essential transcription regulator during early development. Coactivates transcription of some euchromatin genes and repress transcription in of euchromatin genes translocated to heterochromatin. The protein is Supporter of activation of yellow protein (e(y)3) of Drosophila melanogaster (Fruit fly).